The sequence spans 545 residues: Probable protein kinase UbiB (545 aa).

In terms of domain architecture, Protein kinase spans 123–501 (DFEPIALASA…QIKQRQSQYL (379 aa)). Residues 129–137 (LASASIAQV) and lysine 152 each bind ATP. The active-site Proton acceptor is aspartate 287. The helical transmembrane segment at 508–528 (LFLCGSLFLLSGLANIPWLFI) threads the bilayer.

The protein belongs to the ABC1 family. UbiB subfamily.

The protein resides in the cell inner membrane. The protein operates within cofactor biosynthesis; ubiquinone biosynthesis [regulation]. Its function is as follows. Is probably a protein kinase regulator of UbiI activity which is involved in aerobic coenzyme Q (ubiquinone) biosynthesis. In Photorhabdus laumondii subsp. laumondii (strain DSM 15139 / CIP 105565 / TT01) (Photorhabdus luminescens subsp. laumondii), this protein is Probable protein kinase UbiB.